A 99-amino-acid polypeptide reads, in one-letter code: MLKLLAFVALLSVSVSANVDMTGFGLPADNHKVALGGPIQESAGLADEGEQQLQLVDVSPQDEGQQNVAHVREMFSNVFNSIKTQREQAMAANGSQPTD.

The N-terminal stretch at 1–16 (MLKLLAFVALLSVSVS) is a signal peptide.

The polypeptide is Putative protein tag-209 (tag-209) (Caenorhabditis elegans).